The sequence spans 241 residues: Methylthioribulose-1-phosphate dehydratase (241 aa).

The segment covering 1–17 (MAKQVENNNNDHLVQST) has biased composition (polar residues). The interval 1-21 (MAKQVENNNNDHLVQSTDPEH) is disordered. Residue cysteine 100 coordinates substrate. Histidine 117 and histidine 119 together coordinate Zn(2+). Glutamate 146 acts as the Proton donor/acceptor in catalysis. Histidine 202 is a Zn(2+) binding site.

The protein belongs to the aldolase class II family. MtnB subfamily. Zn(2+) serves as cofactor.

The protein localises to the cytoplasm. It catalyses the reaction 5-(methylsulfanyl)-D-ribulose 1-phosphate = 5-methylsulfanyl-2,3-dioxopentyl phosphate + H2O. Its pathway is amino-acid biosynthesis; L-methionine biosynthesis via salvage pathway; L-methionine from S-methyl-5-thio-alpha-D-ribose 1-phosphate: step 2/6. Functionally, catalyzes the dehydration of methylthioribulose-1-phosphate (MTRu-1-P) into 2,3-diketo-5-methylthiopentyl-1-phosphate (DK-MTP-1-P). This is Methylthioribulose-1-phosphate dehydratase from Aspergillus flavus (strain ATCC 200026 / FGSC A1120 / IAM 13836 / NRRL 3357 / JCM 12722 / SRRC 167).